The primary structure comprises 313 residues: Protein FixB (313 aa).

FAD is bound at residue L255 to D283.

Belongs to the ETF alpha-subunit/FixB family. Heterodimer of FixA and FixB.

It participates in amine and polyamine metabolism; carnitine metabolism. Functionally, required for anaerobic carnitine reduction. May bring reductant to CaiA. This chain is Protein FixB, found in Escherichia coli O7:K1 (strain IAI39 / ExPEC).